The following is a 69-amino-acid chain: Putative membrane protein insertion efficiency factor (69 aa).

Belongs to the UPF0161 family.

It is found in the cell membrane. Functionally, could be involved in insertion of integral membrane proteins into the membrane. The protein is Putative membrane protein insertion efficiency factor of Desulfitobacterium hafniense (strain Y51).